Consider the following 347-residue polypeptide: NADH-ubiquinone oxidoreductase chain 2 (347 aa).

11 helical membrane-spanning segments follow: residues Pro3–Ser23, His25–Met45, Tyr59–Met79, Thr96–Pro116, Val122–Leu142, Ile149–Gly169, Ile178–Pro198, Met200–Met220, Ser242–Pro262, Glu274–Met294, and Met323–Leu343.

Belongs to the complex I subunit 2 family. Core subunit of respiratory chain NADH dehydrogenase (Complex I) which is composed of 45 different subunits. Interacts with TMEM242.

The protein resides in the mitochondrion inner membrane. It carries out the reaction a ubiquinone + NADH + 5 H(+)(in) = a ubiquinol + NAD(+) + 4 H(+)(out). In terms of biological role, core subunit of the mitochondrial membrane respiratory chain NADH dehydrogenase (Complex I) that is believed to belong to the minimal assembly required for catalysis. Complex I functions in the transfer of electrons from NADH to the respiratory chain. The immediate electron acceptor for the enzyme is believed to be ubiquinone. In Suricata suricatta (Meerkat), this protein is NADH-ubiquinone oxidoreductase chain 2.